We begin with the raw amino-acid sequence, 259 residues long: UPF0246 protein PSPTO_1244 (259 aa).

It belongs to the UPF0246 family.

The chain is UPF0246 protein PSPTO_1244 from Pseudomonas syringae pv. tomato (strain ATCC BAA-871 / DC3000).